The following is a 1374-amino-acid chain: Probable ATP-dependent RNA helicase spindle-E (1374 aa).

Positions 46-212 (LARIRENPVI…FKTPKKVGYL (167 aa)) constitute a Helicase ATP-binding domain. 59–66 (GPTGCGKT) serves as a coordination point for ATP. The short motif at 158–161 (DEIH) is the DEAH box element. Residues 265-447 (VCDRLIENMH…NVILKAKLLE (183 aa)) enclose the Helicase C-terminal domain. The Tudor domain maps to 866–931 (QFAVGQMVAA…RKLDGPLAYM (66 aa)).

It belongs to the DEAD box helicase family. DEAH subfamily.

The protein resides in the cytoplasm. The catalysed reaction is ATP + H2O = ADP + phosphate + H(+). In terms of biological role, probable ATP-binding RNA helicase which plays a central role during gametogenesis by repressing transposable elements and preventing their mobilization, which is essential for the germline integrity. Acts via the piRNA metabolic process, which mediates the repression of transposable elements during meiosis by forming complexes composed of piRNAs and Piwi proteins and govern the methylation and subsequent repression of transposons. In Aedes aegypti (Yellowfever mosquito), this protein is Probable ATP-dependent RNA helicase spindle-E (spn-E).